A 198-amino-acid polypeptide reads, in one-letter code: Fimbriae W protein (198 aa).

Residues 127-192 (HYCTTRHFSV…QFLKYIRVNL (66 aa)) form the HTH luxR-type domain.

It localises to the fimbrium. The protein is Fimbriae W protein (fimW) of Salmonella typhimurium (strain LT2 / SGSC1412 / ATCC 700720).